The primary structure comprises 277 residues: MKQLYGVIGNPIGHSLSPVMHNDAFEHLNMDAHYHAFLVKEEVLGEAVRGLKALGISGFNVTTPHKVAIMDYLDEIDPLAKQIGAVNTVVHKDGKLIGYNTDGIGFVRALQSISSEPLQEKRILLLGAGGASRAIYFSLADAGVKEIDVANRTVDKAKELIAACTATVHSVALSLEKATKEQGNYDIIIQTTTIGMHPRVEHTPLQISSLKKGTIVSDIIYNPFETKILCEAKEQGAIIQNGIDMFVYQGALAFEMWTGCVPNIERMKQLVIRKLGG.

Residues 15–17 and T62 each bind shikimate; that span reads SLS. The active-site Proton acceptor is K66. Positions 87 and 102 each coordinate shikimate. Residues 127 to 131, 151 to 156, and I219 contribute to the NADP(+) site; these read GAGGA and NRTVDK. Position 221 (Y221) interacts with shikimate. G242 contacts NADP(+).

The protein belongs to the shikimate dehydrogenase family. As to quaternary structure, homodimer.

It catalyses the reaction shikimate + NADP(+) = 3-dehydroshikimate + NADPH + H(+). The protein operates within metabolic intermediate biosynthesis; chorismate biosynthesis; chorismate from D-erythrose 4-phosphate and phosphoenolpyruvate: step 4/7. Functionally, involved in the biosynthesis of the chorismate, which leads to the biosynthesis of aromatic amino acids. Catalyzes the reversible NADPH linked reduction of 3-dehydroshikimate (DHSA) to yield shikimate (SA). The protein is Shikimate dehydrogenase (NADP(+)) of Bacillus cereus (strain AH820).